Consider the following 535-residue polypeptide: MTKFIFVTGGVVSSLGKGITAASLGRLLKDRGLKVTIQKFDPYLNVDPGTMSPYQHGEVFVTDDGAETDLDLGHYERFIDINLNKYSNVTAGKVYSHVLKKERRGDYLGGTVQVIPHITNEIKERLLLAGESTNADVVITEIGGTTGDIESLPFLEAIRQIRSDLGRENVMYVHCTLLPYIKAAGEMKTKPTQHSVKELRGLGIQPDLIVVRTEYEMTQDLKDKIALFCDIKKESVIECRDADSLYEIPLQLSKQNMDDIVIQRLQLNAKYETQLDEWKHLLNTVNNLDGKITIGLVGKYVSLQDAYLSVVESLKHAGYPFKKDVVVKWIDSSEVNDDNVEAYLSDVDGILVPGGFGFRASEGKIAAIRYARENNIPFFGICLGMQLATVEFARHVLGYEGAHSAELDPSTPYPIIDLLPEQKDIEDLGGTLRLGLYPCHIKEGTLAEKIYNKNDIEERHRHRYEFNNEFREQLESNGMVFSGTSPDGRLVEIIEIPKNDFFIACQFHPEFLSRPNRPQPIFKSFVEAALNYQQK.

The amidoligase domain stretch occupies residues 1–267 (MTKFIFVTGG…DDIVIQRLQL (267 aa)). S13 contributes to the CTP binding site. S13 serves as a coordination point for UTP. 14 to 19 (SLGKGI) serves as a coordination point for ATP. An L-glutamine-binding site is contributed by Y54. Residue D71 coordinates ATP. Mg(2+) is bound by residues D71 and E141. CTP-binding positions include 148-150 (DIE), 188-193 (KTKPTQ), and K224. Residues 188-193 (KTKPTQ) and K224 contribute to the UTP site. Position 240–242 (240–242 (RDA)) interacts with ATP. Residues 293–535 (TIGLVGKYVS…VEAALNYQQK (243 aa)) form the Glutamine amidotransferase type-1 domain. G355 serves as a coordination point for L-glutamine. C382 acts as the Nucleophile; for glutamine hydrolysis in catalysis. L-glutamine contacts are provided by residues 383–386 (LGMQ), E406, and R463. Catalysis depends on residues H508 and E510.

This sequence belongs to the CTP synthase family. As to quaternary structure, homotetramer.

It catalyses the reaction UTP + L-glutamine + ATP + H2O = CTP + L-glutamate + ADP + phosphate + 2 H(+). The enzyme catalyses L-glutamine + H2O = L-glutamate + NH4(+). It carries out the reaction UTP + NH4(+) + ATP = CTP + ADP + phosphate + 2 H(+). The protein operates within pyrimidine metabolism; CTP biosynthesis via de novo pathway; CTP from UDP: step 2/2. Its activity is regulated as follows. Allosterically activated by GTP, when glutamine is the substrate; GTP has no effect on the reaction when ammonia is the substrate. The allosteric effector GTP functions by stabilizing the protein conformation that binds the tetrahedral intermediate(s) formed during glutamine hydrolysis. Inhibited by the product CTP, via allosteric rather than competitive inhibition. Functionally, catalyzes the ATP-dependent amination of UTP to CTP with either L-glutamine or ammonia as the source of nitrogen. Regulates intracellular CTP levels through interactions with the four ribonucleotide triphosphates. In Staphylococcus epidermidis (strain ATCC 35984 / DSM 28319 / BCRC 17069 / CCUG 31568 / BM 3577 / RP62A), this protein is CTP synthase.